The following is a 451-amino-acid chain: Tubulin alpha chain (451 aa).

Glutamine 11 is a GTP binding site. Position 40 is an N6-acetyllysine (lysine 40). Residues glutamate 71, glycine 144, threonine 145, threonine 179, asparagine 206, and asparagine 228 each coordinate GTP. Glutamate 71 contributes to the Mg(2+) binding site. The active site involves glutamate 254.

Belongs to the tubulin family. In terms of assembly, dimer of alpha and beta chains. A typical microtubule is a hollow water-filled tube with an outer diameter of 25 nm and an inner diameter of 15 nM. Alpha-beta heterodimers associate head-to-tail to form protofilaments running lengthwise along the microtubule wall with the beta-tubulin subunit facing the microtubule plus end conferring a structural polarity. Microtubules usually have 13 protofilaments but different protofilament numbers can be found in some organisms and specialized cells. Requires Mg(2+) as cofactor. In terms of processing, undergoes a tyrosination/detyrosination cycle, the cyclic removal and re-addition of a C-terminal tyrosine residue by the enzymes tubulin tyrosine carboxypeptidase (TTCP) and tubulin tyrosine ligase (TTL), respectively. Acetylation of alpha chains at Lys-40 stabilizes microtubules and affects affinity and processivity of microtubule motors. This modification has a role in multiple cellular functions, ranging from cell motility, cell cycle progression or cell differentiation to intracellular trafficking and signaling.

The protein resides in the cytoplasm. The protein localises to the cytoskeleton. It catalyses the reaction GTP + H2O = GDP + phosphate + H(+). Functionally, tubulin is the major constituent of microtubules, a cylinder consisting of laterally associated linear protofilaments composed of alpha- and beta-tubulin heterodimers. Microtubules grow by the addition of GTP-tubulin dimers to the microtubule end, where a stabilizing cap forms. Below the cap, tubulin dimers are in GDP-bound state, owing to GTPase activity of alpha-tubulin. In Triticum aestivum (Wheat), this protein is Tubulin alpha chain (TUBA).